The following is a 285-amino-acid chain: Probable endonuclease 4 (285 aa).

Residues His69, His109, Glu145, Asp179, His182, His216, Asp229, His231, and Glu261 each coordinate Zn(2+).

It belongs to the AP endonuclease 2 family. It depends on Zn(2+) as a cofactor.

It carries out the reaction Endonucleolytic cleavage to 5'-phosphooligonucleotide end-products.. Functionally, endonuclease IV plays a role in DNA repair. It cleaves phosphodiester bonds at apurinic or apyrimidinic (AP) sites, generating a 3'-hydroxyl group and a 5'-terminal sugar phosphate. This is Probable endonuclease 4 from Shigella sonnei (strain Ss046).